A 255-amino-acid chain; its full sequence is Cell division protein ZapD (255 aa).

It belongs to the ZapD family. As to quaternary structure, interacts with FtsZ.

It localises to the cytoplasm. Its function is as follows. Cell division factor that enhances FtsZ-ring assembly. Directly interacts with FtsZ and promotes bundling of FtsZ protofilaments, with a reduction in FtsZ GTPase activity. The protein is Cell division protein ZapD of Methylococcus capsulatus (strain ATCC 33009 / NCIMB 11132 / Bath).